A 316-amino-acid polypeptide reads, in one-letter code: 4-hydroxy-3-methylbut-2-enyl diphosphate reductase (316 aa).

A [4Fe-4S] cluster-binding site is contributed by C18. (2E)-4-hydroxy-3-methylbut-2-enyl diphosphate-binding residues include H47 and H80. Positions 47 and 80 each coordinate dimethylallyl diphosphate. Isopentenyl diphosphate contacts are provided by H47 and H80. Residue C102 coordinates [4Fe-4S] cluster. H130 contributes to the (2E)-4-hydroxy-3-methylbut-2-enyl diphosphate binding site. H130 is a dimethylallyl diphosphate binding site. H130 is an isopentenyl diphosphate binding site. The active-site Proton donor is E132. T171 contributes to the (2E)-4-hydroxy-3-methylbut-2-enyl diphosphate binding site. Residue C201 participates in [4Fe-4S] cluster binding. (2E)-4-hydroxy-3-methylbut-2-enyl diphosphate-binding residues include S229, S230, N231, and S274. Positions 229, 230, 231, and 274 each coordinate dimethylallyl diphosphate. Positions 229, 230, 231, and 274 each coordinate isopentenyl diphosphate.

The protein belongs to the IspH family. [4Fe-4S] cluster is required as a cofactor.

It catalyses the reaction isopentenyl diphosphate + 2 oxidized [2Fe-2S]-[ferredoxin] + H2O = (2E)-4-hydroxy-3-methylbut-2-enyl diphosphate + 2 reduced [2Fe-2S]-[ferredoxin] + 2 H(+). The enzyme catalyses dimethylallyl diphosphate + 2 oxidized [2Fe-2S]-[ferredoxin] + H2O = (2E)-4-hydroxy-3-methylbut-2-enyl diphosphate + 2 reduced [2Fe-2S]-[ferredoxin] + 2 H(+). It functions in the pathway isoprenoid biosynthesis; dimethylallyl diphosphate biosynthesis; dimethylallyl diphosphate from (2E)-4-hydroxy-3-methylbutenyl diphosphate: step 1/1. The protein operates within isoprenoid biosynthesis; isopentenyl diphosphate biosynthesis via DXP pathway; isopentenyl diphosphate from 1-deoxy-D-xylulose 5-phosphate: step 6/6. Catalyzes the conversion of 1-hydroxy-2-methyl-2-(E)-butenyl 4-diphosphate (HMBPP) into a mixture of isopentenyl diphosphate (IPP) and dimethylallyl diphosphate (DMAPP). Acts in the terminal step of the DOXP/MEP pathway for isoprenoid precursor biosynthesis. The chain is 4-hydroxy-3-methylbut-2-enyl diphosphate reductase from Ruegeria sp. (strain TM1040) (Silicibacter sp.).